The primary structure comprises 356 residues: Outer membrane protein Omp38 (356 aa).

Positions 1–19 (MKLSRIALATMLVAAPLAA) are cleaved as a signal peptide. The OmpA-like domain maps to 221-339 (ELTEDLNMEL…RVFATITGSR (119 aa)). Meso-2,6-diaminopimelate-binding residues include Asn237, Asp271, Thr273, Asn279, and Arg286.

The protein belongs to the outer membrane OOP (TC 1.B.6) superfamily. As to quaternary structure, homotrimer. Forms a pore with a size of 1.3 nm.

Its subcellular location is the cell outer membrane. The protein localises to the host mitochondrion. Its function is as follows. Functions as a porin. Induces apoptosis in human cell lines through caspase-dependent and AIF-dependent pathways. Purified Omp38 enters host cell and localizes to the mitochondria, which presumably leads to a release of proapoptotic molecules such as cytochrome c and AIF (apoptosis-inducing factor). Binds peptidoglycan, contributes to cell wall maintenance. The protein is Outer membrane protein Omp38 of Acinetobacter baumannii (strain ATCC 19606 / DSM 30007 / JCM 6841 / CCUG 19606 / CIP 70.34 / NBRC 109757 / NCIMB 12457 / NCTC 12156 / 81).